The sequence spans 311 residues: Malate dehydrogenase (311 aa).

Residues 7–13 and Asp34 each bind NAD(+); that span reads GAAGGIG. Substrate is bound by residues Arg81 and Arg87. NAD(+) is bound by residues Asn94 and 117 to 119; that span reads ITN. The substrate site is built by Asn119 and Arg153. The active-site Proton acceptor is His177. Residue Met227 participates in NAD(+) binding.

It belongs to the LDH/MDH superfamily. MDH type 1 family. Homodimer.

The enzyme catalyses (S)-malate + NAD(+) = oxaloacetate + NADH + H(+). Its function is as follows. Catalyzes the reversible oxidation of malate to oxaloacetate. In Shewanella baltica (strain OS223), this protein is Malate dehydrogenase.